We begin with the raw amino-acid sequence, 101 residues long: Helix-loop-helix protein 17 (101 aa).

The segment at 14–27 (GVRLSINLRERCRM) is basic motif. The region spanning 14-68 (GVRLSINLRERCRMHDLNEALDDLRAVIPYAHGGSVRKLSKIATLLLAKNHIIMQ) is the bHLH domain. The interval 28-68 (HDLNEALDDLRAVIPYAHGGSVRKLSKIATLLLAKNHIIMQ) is helix-loop-helix motif.

Expressed in neuronal tissues of the head, including sheath cells of the cephalic sensilla (CEPsh) glia.

The protein resides in the nucleus. Functionally, probable transcription factor that regulates the expression of dopamine receptors dop-1, dop-2 and dop-3 and thus dopamine-dependent behaviors. May act redundantly with hlh-31 and hlh-32 to regulate ventral CEPsh glia functions. May play a role in chemotactic responses in larvae. This is Helix-loop-helix protein 17 from Caenorhabditis elegans.